Here is a 430-residue protein sequence, read N- to C-terminus: Serine--tRNA ligase (430 aa).

An L-serine-binding site is contributed by 231-233; it reads TSE. ATP is bound at residue 262–264; that stretch reads RSE. Position 285 (Glu-285) interacts with L-serine. 349–352 contacts ATP; sequence EISS. L-serine is bound at residue Ser-385.

The protein belongs to the class-II aminoacyl-tRNA synthetase family. Type-1 seryl-tRNA synthetase subfamily. In terms of assembly, homodimer. The tRNA molecule binds across the dimer.

It localises to the cytoplasm. It catalyses the reaction tRNA(Ser) + L-serine + ATP = L-seryl-tRNA(Ser) + AMP + diphosphate + H(+). The catalysed reaction is tRNA(Sec) + L-serine + ATP = L-seryl-tRNA(Sec) + AMP + diphosphate + H(+). Its pathway is aminoacyl-tRNA biosynthesis; selenocysteinyl-tRNA(Sec) biosynthesis; L-seryl-tRNA(Sec) from L-serine and tRNA(Sec): step 1/1. Functionally, catalyzes the attachment of serine to tRNA(Ser). Is also able to aminoacylate tRNA(Sec) with serine, to form the misacylated tRNA L-seryl-tRNA(Sec), which will be further converted into selenocysteinyl-tRNA(Sec). This chain is Serine--tRNA ligase, found in Ruegeria pomeroyi (strain ATCC 700808 / DSM 15171 / DSS-3) (Silicibacter pomeroyi).